The primary structure comprises 662 residues: MPAVDKLLLEEALQDSPQTRSLLSVFEEDAGTLTDYTNQLLQAMQRVYGAQNEMCLATQQLSRQLLAYEKQNFALGKGDEEVISTLHYFSKVMDELNGLHSELAKQLADTMVLPVIQFREKDLTEVSTLKDLFGLASNEHDLSMAKYSRLPKRKENERVKTDVAKEVAAARRKQHLSSLQYYCALNALQYRKRAAMMEPLIGFAHGQINFFKKGAEMFSKSMDGFLSSVTDMVQSIQVELEAEADKMRVSQQELLSVSESVYTPDIDVATPQINRNLIQKTGYLNLRNKTGLVTTTWERLYFFTQGGNLMCQPRGAVAGGLIQDLDNCSVMAVDCEDRRYCFQISTPSGKPGIILQAESRKEYEEWICAINNISRQIYLTDNPEAVAIKLNQTALQAVTPITSFGKKQESFYFSQNIKNSDTGYVKIVPKAAASIPETEELIAPGTPIQFDIVLPATEFLDQNRGSRRINPFGETEDDSFPDAEDSLLQQMFIVRFLGSMAVKTDSTTEVIYEAMRQVLAARAIHNIFRTTESHLMVTSQTLRLIDPQTQVSRACFELTSVTQFAAHQENKRLVGFVIRVPESTGEESLSTYIFESNSEGEKICYAINLGKEIIEVQKDPEALARLMLSVPLTNDGKYVLLNDQADDTGGSPSDHRGAESEA.

In terms of domain architecture, BAR spans 3–268 (AVDKLLLEEA…ESVYTPDIDV (266 aa)). Residues 277–375 (LIQKTGYLNL…WICAINNISR (99 aa)) enclose the PH domain. The PID domain maps to 486 to 635 (SLLQQMFIVR…LMLSVPLTND (150 aa)). The disordered stretch occupies residues 643 to 662 (DQADDTGGSPSDHRGAESEA). Positions 653 to 662 (SDHRGAESEA) are enriched in basic and acidic residues.

In terms of assembly, homodimer. Homotetramer. Binds RAB5A/Rab5 through an N-terminal domain. This interaction is essential for its recruitment to endosomal membranes as well as its role in cell proliferation. Binds subunits of the NuRD/MeCP1 complex. Interacts with FSHR; interaction is independent of follicle stimulating hormone stimulation. Interacts with APPL1; the interaction is decreased by adiponectin in a time-dependent manner. Forms a complex comprising APPL1, RUVBL2, CTNNB1, HDAC1 and HDAC2; interaction reduces interaction between CTNNB1, HDAC1, HDAC2 and RUVBL2 leading to the decrease of deacetylase activity of this complex; affects the recruitment of repressive complexes to the Wnt target genes. Interacts (via BAR domain) with TBC1D1; interaction is dependent of TBC1D1 phosphorylation at 'Ser-235'; interaction diminishes the phosphorylation of TBC1D1 at 'Thr-596', resulting in inhibition of SLC2A4 translocation and glucose uptake. Interacts with ANXA2; targets APPL2 to endosomes and acting in parallel to RAB5A. Interacts with RAB31 (in GTP-bound form); interaction contributes to or enhances recruitment of APPL2 to the phagosomes; interaction enhances Fc-gamma receptor-mediated phagocytosis through PI3K/Akt signaling in macrophages. Interacts with PIK3R1; forms a complex with PIK3R1 and APPL1. Interacts (via BAR domain) with ADIPOR1; hinders the accessibility of APPL1 to ADIPOR1; negatively regulates adiponectin signaling; ADIPOQ dissociates this interaction and facilitates the recruitment of APPL1 to ADIPOR1. Interacts (via BAR domain) with ADIPOR2; ADIPOQ dissociates this interaction.

The protein localises to the early endosome membrane. The protein resides in the nucleus. It is found in the cell membrane. Its subcellular location is the endosome membrane. It localises to the cytoplasm. The protein localises to the cytoplasmic vesicle. The protein resides in the phagosome. It is found in the cell projection. Its subcellular location is the ruffle. It localises to the ruffle membrane. The protein localises to the phagosome membrane. Functionally, multifunctional adapter protein that binds to various membrane receptors, nuclear factors and signaling proteins to regulate many processes, such as cell proliferation, immune response, endosomal trafficking and cell metabolism. Regulates signaling pathway leading to cell proliferation through interaction with RAB5A and subunits of the NuRD/MeCP1 complex. Plays a role in immune response by modulating phagocytosis, inflammatory and innate immune responses. In macrophages, enhances Fc-gamma receptor-mediated phagocytosis through interaction with RAB31 leading to activation of PI3K/Akt signaling. In response to LPS, modulates inflammatory responses by playing a key role on the regulation of TLR4 signaling and in the nuclear translocation of RELA/NF-kappa-B p65 and the secretion of pro- and anti-inflammatory cytokines. Also functions as a negative regulator of innate immune response via inhibition of AKT1 signaling pathway by forming a complex with APPL1 and PIK3R1. Plays a role in endosomal trafficking of TGFBR1 from the endosomes to the nucleus. Plays a role in cell metabolism by regulating adiponecting ans insulin signaling pathways and adaptative thermogenesis. In muscle, negatively regulates adiponectin-simulated glucose uptake and fatty acid oyidation by inhibiting adiponectin signaling pathway through APPL1 sequestration thereby antagonizing APPL1 action. In muscles, negatively regulates insulin-induced plasma membrane recruitment of GLUT4 and glucose uptake through interaction with TBC1D1. Plays a role in cold and diet-induced adaptive thermogenesis by activating ventromedial hypothalamus (VMH) neurons throught AMPK inhibition which enhances sympathetic outflow to subcutaneous white adipose tissue (sWAT), sWAT beiging and cold tolerance. Also plays a role in other signaling pathways namely Wnt/beta-catenin, HGF and glucocorticoid receptor signaling. Positive regulator of beta-catenin/TCF-dependent transcription through direct interaction with RUVBL2/reptin resulting in the relief of RUVBL2-mediated repression of beta-catenin/TCF target genes by modulating the interactions within the beta-catenin-reptin-HDAC complex. May affect adult neurogenesis in hippocampus and olfactory system via regulating the sensitivity of glucocorticoid receptor. Required for fibroblast migration through HGF cell signaling. In Rattus norvegicus (Rat), this protein is DCC-interacting protein 13-beta.